Reading from the N-terminus, the 222-residue chain is N-(5'-phosphoribosyl)anthranilate isomerase (222 aa).

This sequence belongs to the TrpF family.

The enzyme catalyses N-(5-phospho-beta-D-ribosyl)anthranilate = 1-(2-carboxyphenylamino)-1-deoxy-D-ribulose 5-phosphate. It participates in amino-acid biosynthesis; L-tryptophan biosynthesis; L-tryptophan from chorismate: step 3/5. The chain is N-(5'-phosphoribosyl)anthranilate isomerase from Brucella abortus (strain S19).